Reading from the N-terminus, the 214-residue chain is Transmembrane emp24 domain-containing protein p24delta10 (214 aa).

An N-terminal signal peptide occupies residues 1–24 (MFLQSQKLWTMLLILAIWSPISHS). Residues 25 to 181 (LHFDLHSGRT…QDLNRSTNTK (157 aa)) lie on the Lumenal side of the membrane. One can recognise a GOLD domain in the interval 34–149 (TKCIAEDIKS…VEVMEFEVKS (116 aa)). Positions 164-177 (LRDREEEMQDLNRS) form a coiled coil. The residue at position 167 (Arg-167) is an Omega-N-methylated arginine. N-linked (GlcNAc...) asparagine glycosylation is present at Asn-175. A helical transmembrane segment spans residues 182-202 (MAWLSVLSFFVCIGVAGMQFL). Topologically, residues 203–214 (HLKTFFEKKKVI) are cytoplasmic. The COPII vesicle coat-binding motif lies at 207-208 (FF). Positions 207 to 214 (FFEKKKVI) match the COPI vesicle coat-binding motif.

Belongs to the EMP24/GP25L family. In terms of assembly, probably oligomerizes with other members of the EMP24/GP25L family. Associates with the COPI vesicle coat (coatomer). Associates with the COPII vesicle coat (coatomer).

It localises to the endoplasmic reticulum membrane. Its subcellular location is the golgi apparatus. The protein resides in the cis-Golgi network membrane. It is found in the golgi stack membrane. Functionally, involved in vesicular protein trafficking. Mainly functions in the early secretory pathway. Thought to act as cargo receptor at the lumenal side for incorporation of secretory cargo molecules into transport vesicles and to be involved in vesicle coat formation at the cytoplasmic side. This chain is Transmembrane emp24 domain-containing protein p24delta10, found in Arabidopsis thaliana (Mouse-ear cress).